A 2442-amino-acid chain; its full sequence is Centrosome-associated protein CEP250 (2442 aa).

Coiled-coil stretches lie at residues 95 to 158 (NLDE…KESQ), 244 to 352 (AQLL…TQVM), 395 to 1172 (LTRR…EQQP), and 1243 to 2227 (SALH…KERL). Basic and acidic residues-rich tracts occupy residues 1273 to 1289 (LTDTEAEKSQVHTELQD) and 1699 to 1715 (LTTQRQLMQERAEEGKG). Disordered stretches follow at residues 1273–1308 (LTDTEAEKSQVHTELQDLQRQLSQNQEEKSKWEGKQ), 1699–1725 (LTTQRQLMQERAEEGKGPSKAQRGSLE), and 1820–1839 (EALQQEQQQAQGQEERVKEK). Residues 1820 to 1831 (EALQQEQQQAQG) are compositionally biased toward low complexity. A Phosphoserine modification is found at serine 2138. Position 2218 is a phosphothreonine (threonine 2218). The tract at residues 2223–2244 (EKERLHSPGATSTAELGSRGEQ) is disordered. Serine 2229, serine 2252, and serine 2322 each carry phosphoserine. A coiled-coil region spans residues 2262 to 2376 (GMEKQSWRQR…RKQKQDYITR (115 aa)). Disordered stretches follow at residues 2307–2345 (RRKLKREAMRAAQAGSLEISKATASSPTQQDGRGQKNSD) and 2416–2442 (ESLTQSLTSPGPVLLHPSPSTTQAASR). The segment covering 2328-2338 (ATASSPTQQDG) has biased composition (polar residues). 2 positions are modified to phosphoserine; by NEK2: serine 2417 and serine 2421. The span at 2433–2442 (SPSTTQAASR) shows a compositional bias: polar residues.

As to quaternary structure, monomer and homodimer. Forms a complex in vitro with both NEK2 kinase and the PPP1CC catalytic subunit of protein phosphatase 1 (PP1). Interacts with CEP135. Interacts with CROCC/rootletin. Interacts with CNTLN. Interacts with NIN (via C-terminus). Interacts with CCDC102B (via N-terminus); the interaction results in recruitment of CCDC102B to the proximal ends of centrioles. Differentially phosphorylated during cell cycle. Phosphorylation may regulate association/dissociation from centrosome. During M phase of mitosis, C-terminal part is phosphorylated by NEK2, suggesting that it may trigger the dissociation from the mitotic centrosome. Dephosphorylated in vitro by the PP1 phosphatase. In terms of tissue distribution, ubiquitously and weakly expressed.

It localises to the cytoplasm. Its subcellular location is the perinuclear region. It is found in the cytoskeleton. The protein resides in the microtubule organizing center. The protein localises to the centrosome. It localises to the centriole. Its subcellular location is the cilium basal body. It is found in the cell projection. The protein resides in the cilium. The protein localises to the photoreceptor outer segment. It localises to the photoreceptor inner segment. Plays an important role in centrosome cohesion during interphase. Recruits CCDC102B to the proximal ends of centrioles. Maintains centrosome cohesion by forming intercentriolar linkages. Accumulates at the proximal end of each centriole, forming supramolecular assemblies with viscous material properties that promote organelle cohesion. May be involved in ciliogenesis. This Homo sapiens (Human) protein is Centrosome-associated protein CEP250 (CEP250).